Here is a 441-residue protein sequence, read N- to C-terminus: 2-oxoisovalerate dehydrogenase subunit alpha, mitochondrial (441 aa).

The N-terminal 17 residues, 1–17, are a transit peptide targeting the mitochondrion; the sequence is MISQSYRILSRISRNNE. 145–147 provides a ligand contact to thiamine diphosphate; the sequence is QYR. 3 residues coordinate K(+): S194, T199, and Q200.

It belongs to the BCKDHA family. Heterotetramer of alpha and beta chains. Thiamine diphosphate serves as cofactor.

The protein resides in the mitochondrion matrix. It catalyses the reaction N(6)-[(R)-lipoyl]-L-lysyl-[protein] + 3-methyl-2-oxobutanoate + H(+) = N(6)-[(R)-S(8)-2-methylpropanoyldihydrolipoyl]-L-lysyl-[protein] + CO2. In terms of biological role, the branched-chain alpha-keto dehydrogenase complex catalyzes the overall conversion of alpha-keto acids to acyl-CoA and CO(2). It contains multiple copies of three enzymatic components: branched-chain alpha-keto acid decarboxylase (E1), lipoamide acyltransferase (E2) and lipoamide dehydrogenase (E3). This Dictyostelium discoideum (Social amoeba) protein is 2-oxoisovalerate dehydrogenase subunit alpha, mitochondrial (bkdA).